A 367-amino-acid polypeptide reads, in one-letter code: tRNA uridine(34) hydroxylase (367 aa).

The Rhodanese domain maps to 159 to 253 (EDENSIVVDV…YAHEVSQKGL (95 aa)). Residue C213 is the Cysteine persulfide intermediate of the active site.

It belongs to the TrhO family.

The enzyme catalyses uridine(34) in tRNA + AH2 + O2 = 5-hydroxyuridine(34) in tRNA + A + H2O. Catalyzes oxygen-dependent 5-hydroxyuridine (ho5U) modification at position 34 in tRNAs. This Leptospira interrogans serogroup Icterohaemorrhagiae serovar Lai (strain 56601) protein is tRNA uridine(34) hydroxylase.